Here is a 1281-residue protein sequence, read N- to C-terminus: Angiotensin-converting enzyme (1281 aa).

The first 17 residues, 1–17 (MPAALGLLLPWLSLVGA), serve as a signal peptide directing secretion. Residues 18–1241 (LQPGLEPPQS…MSVGTKQATA (1224 aa)) are Extracellular-facing. Peptidase M2 domains lie at 28-610 (DPTE…LGWP) and 629-1208 (IVDE…LGWP). Asn42, Asn62, Asn80, Asn99, and Asn148 each carry an N-linked (GlcNAc...) asparagine glycan. Cysteines 145 and 151 form a disulfide. Tyr217 serves as a coordination point for chloride. N-linked (GlcNAc...) asparagine glycosylation is present at Asn304. Cysteines 345 and 363 form a disulfide. His376 contacts Zn(2+). The active-site Proton acceptor 1 is Glu377. His380 and Glu404 together coordinate Zn(2+). An N-linked (GlcNAc...) asparagine glycan is attached at Asn495. His506 acts as the Proton donor 1 in catalysis. Arg515 contacts chloride. A disulfide bridge links Cys531 with Cys543. N-linked (GlcNAc...) asparagine glycosylation is found at Asn535, Asn573, Asn601, Asn643, Asn663, and Asn746. Cys743 and Cys749 form a disulfide bridge. Chloride contacts are provided by Arg777 and Tyr815. Cys943 and Cys961 form a disulfide bridge. His974 serves as a coordination point for Zn(2+). Residue Glu975 is the Proton acceptor 2 of the active site. Zn(2+) contacts are provided by His978 and Glu1002. Chloride contacts are provided by Trp1076 and Arg1080. Catalysis depends on His1104, which acts as the Proton donor 2. Arg1113 provides a ligand contact to chloride. Residues Cys1129 and Cys1141 are joined by a disulfide bond. N-linked (GlcNAc...) asparagine glycosylation occurs at Asn1177. The segment at 1201-1240 (NGEVLGWPEYSWTPYAVTEFHAATDTADFLGMSVGTKQAT) is juxtamembrane stalk. A helical transmembrane segment spans residues 1242 to 1262 (GAWVLLALALVFLITSIFLGV). The Cytoplasmic portion of the chain corresponds to 1263–1281 (KLFSSRRKAFKSSSEMELK).

Belongs to the peptidase M2 family. The cofactor is Zn(2+). Chloride serves as cofactor.

It localises to the cell membrane. Its subcellular location is the cytoplasm. The enzyme catalyses Release of a C-terminal dipeptide, oligopeptide-|-Xaa-Yaa, when Xaa is not Pro, and Yaa is neither Asp nor Glu. Thus, conversion of angiotensin I to angiotensin II, with increase in vasoconstrictor activity, but no action on angiotensin II.. It catalyses the reaction angiotensin I + H2O = L-histidyl-L-leucine + angiotensin II. It carries out the reaction bradykinin + H2O = L-Phe-L-Arg + bradykinin(1-7). The catalysed reaction is substance P + H2O = substance P(1-9) + L-Leu-L-Met-NH2. The enzyme catalyses substance P + H2O = substance P(1-8) + Gly-L-Leu-L-Met-NH2. It catalyses the reaction substance P + H2O = L-Phe-L-Phe-Gly-L-Leu-L-Met-NH2 + substance P(1-6). It carries out the reaction neurotensin + H2O = neurotensin(1-11) + L-isoleucyl-L-leucine. The catalysed reaction is goralatide + H2O = N-acetyl-L-seryl-L-aspartate + L-lysyl-L-proline. The enzyme catalyses Met-enkephalin + H2O = L-phenylalanyl-L-methionine + L-tyrosylglycylglycine. It catalyses the reaction Leu-enkephalin + H2O = L-tyrosylglycylglycine + L-phenylalanyl-L-leucine. It carries out the reaction Met-enkephalin-Arg-Phe + H2O = L-arginyl-L-phenylalanine + Met-enkephalin. Its function is as follows. Dipeptidyl carboxypeptidase that removes dipeptides from the C-terminus of a variety of circulating hormones, such as angiotensin I, bradykinin or enkephalins, thereby playing a key role in the regulation of blood pressure, electrolyte homeostasis or synaptic plasticity. Composed of two similar catalytic domains, each possessing a functional active site, with different selectivity for substrates. Plays a major role in the angiotensin-renin system that regulates blood pressure and sodium retention by the kidney by converting angiotensin I to angiotensin II, resulting in an increase of the vasoconstrictor activity of angiotensin. Also able to inactivate bradykinin, a potent vasodilator, and therefore enhance the blood pressure response. Acts as a regulator of synaptic transmission by mediating cleavage of neuropeptide hormones, such as substance P, neurotensin or enkephalins. Catalyzes degradation of different enkephalin neuropeptides (Met-enkephalin, Leu-enkephalin, Met-enkephalin-Arg-Phe and possibly Met-enkephalin-Arg-Gly-Leu). Also acts as a regulator of hematopoietic stem cell differentiation by mediating degradation of hemoregulatory peptide N-acetyl-SDKP (AcSDKP). This is Angiotensin-converting enzyme from Gallus gallus (Chicken).